The chain runs to 502 residues: ATP synthase subunit alpha (502 aa).

A disordered region spans residues 115 to 135 (VDGLGPINTTNTRPIESPAPG). 169-176 (GDRQTGKT) contacts ATP.

Belongs to the ATPase alpha/beta chains family. In terms of assembly, F-type ATPases have 2 components, CF(1) - the catalytic core - and CF(0) - the membrane proton channel. CF(1) has five subunits: alpha(3), beta(3), gamma(1), delta(1), epsilon(1). CF(0) has three main subunits: a(1), b(2) and c(9-12). The alpha and beta chains form an alternating ring which encloses part of the gamma chain. CF(1) is attached to CF(0) by a central stalk formed by the gamma and epsilon chains, while a peripheral stalk is formed by the delta and b chains.

The protein localises to the cell membrane. It carries out the reaction ATP + H2O + 4 H(+)(in) = ADP + phosphate + 5 H(+)(out). In terms of biological role, produces ATP from ADP in the presence of a proton gradient across the membrane. The alpha chain is a regulatory subunit. The chain is ATP synthase subunit alpha from Bacillus mycoides (strain KBAB4) (Bacillus weihenstephanensis).